Reading from the N-terminus, the 287-residue chain is Centromere protein P (287 aa).

A coiled-coil region spans residues 1–37 (MDNSVYQVYEDEIQLLEEEIKLLSDKYEDIQQESTFF).

The protein belongs to the CENP-P/CTF19 family. As to quaternary structure, component of the CENPA-HI complex, at least composed of CENPH, CENPI, CENPK, CENPL, CENPM, CENPO and CENPP.

The protein localises to the nucleus. It localises to the chromosome. It is found in the centromere. Functionally, component of the CENPA-HI complex, a centromeric complex involved in assembly of kinetochore proteins, mitotic progression and chromosome segregation. In Gallus gallus (Chicken), this protein is Centromere protein P (CENPP).